We begin with the raw amino-acid sequence, 508 residues long: Histidine ammonia-lyase (508 aa).

The segment at residues 143–145 is a cross-link (5-imidazolinone (Ala-Gly)); it reads ASG. Serine 144 carries the post-translational modification 2,3-didehydroalanine (Ser).

The protein belongs to the PAL/histidase family. Contains an active site 4-methylidene-imidazol-5-one (MIO), which is formed autocatalytically by cyclization and dehydration of residues Ala-Ser-Gly.

It localises to the cytoplasm. The catalysed reaction is L-histidine = trans-urocanate + NH4(+). It participates in amino-acid degradation; L-histidine degradation into L-glutamate; N-formimidoyl-L-glutamate from L-histidine: step 1/3. The sequence is that of Histidine ammonia-lyase from Anaeromyxobacter sp. (strain K).